We begin with the raw amino-acid sequence, 125 residues long: Protein ApaG (125 aa).

Residues 1–125 (MIEQPRICVQ…FRLAIPALIH (125 aa)) enclose the ApaG domain.

This Yersinia pestis bv. Antiqua (strain Antiqua) protein is Protein ApaG.